The sequence spans 239 residues: uncharacterized protein (239 aa).

The protein resides in the endoplasmic reticulum. The protein localises to the golgi apparatus. This is an uncharacterized protein from Schizosaccharomyces pombe (strain 972 / ATCC 24843) (Fission yeast).